Reading from the N-terminus, the 429-residue chain is tRNA (guanine(9)-N1)-methyltransferase (429 aa).

One can recognise an SAM-dependent MTase TRM10-type domain in the interval 131–379; the sequence is KERKEAQRRI…AVIPIRKYAP (249 aa). S-adenosyl-L-methionine is bound by residues 285-286, G305, 309-313, C317, L331, and 344-346; these read LS, DRNRH, and KAL. The active-site Proton acceptor is the D309. Residues 383–429 form a disordered region; sequence AKRAKTETKRNEKVEEEVECTSAEGEEDIGVIEESAEVDPEDVFSNQ. Over residues 386 to 395 the composition is skewed to basic and acidic residues; the sequence is AKTETKRNEK. A compositionally biased stretch (acidic residues) spans 396-429; sequence VEEEVECTSAEGEEDIGVIEESAEVDPEDVFSNQ.

Belongs to the class IV-like SAM-binding methyltransferase superfamily. TRM10 family. As to quaternary structure, monomer.

Its subcellular location is the cytoplasm. It localises to the nucleus. The enzyme catalyses guanosine(9) in tRNA + S-adenosyl-L-methionine = N(1)-methylguanosine(9) in tRNA + S-adenosyl-L-homocysteine + H(+). Functionally, S-adenosyl-L-methionine-dependent guanine N(1)-methyltransferase that catalyzes the formation of N(1)-methylguanine at position 9 (m1G9) in cytoplasmic tRNA. This Cryptococcus neoformans var. neoformans serotype D (strain B-3501A) (Filobasidiella neoformans) protein is tRNA (guanine(9)-N1)-methyltransferase.